Consider the following 70-residue polypeptide: Phycobilisome 8.1 kDa linker polypeptide, phycocyanin-associated, rod (70 aa).

Positions 5–63 constitute a CpcD-like domain; it reads SRSFQVEVSGLHQNEVTNQNNYPIRSSGSVFITIPFSRFNEELQRINRLGGKIVNIQPL.

It belongs to the phycobilisome linker protein family.

It localises to the cellular thylakoid membrane. Rod linker protein, associated with phycocyanin. Linker polypeptides determine the state of aggregation and the location of the disk-shaped phycobiliprotein units within the phycobilisome and modulate their spectroscopic properties in order to mediate a directed and optimal energy transfer. This is Phycobilisome 8.1 kDa linker polypeptide, phycocyanin-associated, rod (cpcD3) from Microchaete diplosiphon (Fremyella diplosiphon).